Consider the following 428-residue polypeptide: Leucine-rich repeat-containing protein 42 (428 aa).

LRR repeat units follow at residues 149–170 (VLCSLCLRNRYLVISEKLEEIK), 174–195 (ELTCLDLSCCKLGDEHELLEHL), 202–222 (SVTQLHLKDNCLSDAGVRKMT), 234–255 (NLTLLDLSCNPEITDAGIGYLF), and 259–280 (KLNCLDISGTGLKDIKTVKHKL). Residues 379 to 412 (KHEAISSQESKKSKKRPFEESETEQNNSSQPSKQ) form a disordered region. Residues Ser406 and Ser407 each carry the phosphoserine modification.

This sequence belongs to the LRRC42 family.

This is Leucine-rich repeat-containing protein 42 (LRRC42) from Homo sapiens (Human).